The sequence spans 332 residues: Probable allantoicase (332 aa).

This sequence belongs to the allantoicase family.

It catalyses the reaction allantoate + H2O = (S)-ureidoglycolate + urea. It participates in nitrogen metabolism; (S)-allantoin degradation; (S)-ureidoglycolate from allantoate (aminidohydrolase route): step 1/1. This chain is Probable allantoicase, found in Pseudomonas aeruginosa (strain UCBPP-PA14).